A 114-amino-acid polypeptide reads, in one-letter code: U-myrmeciitoxin(01)-Mg8a (114 aa).

The signal sequence occupies residues 1-20; that stretch reads MKLSTLLVAFVLLVITVILS. Residues 21 to 44 constitute a propeptide that is removed on maturation; that stretch reads TPSTNAKALAESNALAVAVSEAEP.

The protein belongs to the formicidae venom precursor-01 superfamily. In terms of tissue distribution, expressed by the venom gland.

Its subcellular location is the secreted. Functionally, may have antimicrobial properties, like most ant linear peptides. The sequence is that of U-myrmeciitoxin(01)-Mg8a from Myrmecia gulosa (Red bulldog ant).